Consider the following 469-residue polypeptide: Neuraminidase (469 aa).

At 1–6 (MNPNQK) the chain is on the intravirion side. A helical transmembrane segment spans residues 7 to 29 (IITIGVVNTTLSTIALLIGVGNL). Residues 11–33 (GVVNTTLSTIALLIGVGNLIFNT) are involved in apical transport and lipid raft association. At 30–469 (IFNTVIHEKI…DGSNIGFMPK (440 aa)) the chain is on the virion surface side. Residues 36–88 (HEKIGDHQTVVYPTITAPVVPNCSDTIITYNNTVINNITTTIITEAERHFKPS) form a hypervariable stalk region region. N-linked (GlcNAc...) asparagine; by host glycans are attached at residues Asn-57, Asn-66, and Asn-72. The tract at residues 91–469 (LCPFRGFFPF…DGSNIGFMPK (379 aa)) is head of neuraminidase. Intrachain disulfides connect Cys-92/Cys-416, Cys-124/Cys-129, Cys-184/Cys-231, Cys-233/Cys-238, Cys-280/Cys-292, Cys-282/Cys-290, Cys-318/Cys-336, and Cys-420/Cys-447. Arg-118 is a binding site for substrate. An N-linked (GlcNAc...) asparagine; by host glycan is attached at Asn-146. Asp-151 acts as the Proton donor/acceptor in catalysis. Arg-152 serves as a coordination point for substrate. 278 to 279 (EE) is a binding site for substrate. Residue Arg-293 participates in substrate binding. The Ca(2+) site is built by Asp-294 and Gly-298. N-linked (GlcNAc...) asparagine; by host glycosylation occurs at Asn-308. A Ca(2+)-binding site is contributed by Asp-324. Position 370 (Arg-370) interacts with substrate. Tyr-405 (nucleophile) is an active-site residue.

The protein belongs to the glycosyl hydrolase 34 family. As to quaternary structure, homotetramer. Ca(2+) serves as cofactor. Post-translationally, N-glycosylated.

It localises to the virion membrane. The protein resides in the host apical cell membrane. The enzyme catalyses Hydrolysis of alpha-(2-&gt;3)-, alpha-(2-&gt;6)-, alpha-(2-&gt;8)- glycosidic linkages of terminal sialic acid residues in oligosaccharides, glycoproteins, glycolipids, colominic acid and synthetic substrates.. Inhibited by the neuraminidase inhibitors zanamivir (Relenza) and oseltamivir (Tamiflu). These drugs interfere with the release of progeny virus from infected cells and are effective against all influenza strains. Resistance to neuraminidase inhibitors is quite rare. Catalyzes the removal of terminal sialic acid residues from viral and cellular glycoconjugates. Cleaves off the terminal sialic acids on the glycosylated HA during virus budding to facilitate virus release. Additionally helps virus spread through the circulation by further removing sialic acids from the cell surface. These cleavages prevent self-aggregation and ensure the efficient spread of the progeny virus from cell to cell. Otherwise, infection would be limited to one round of replication. Described as a receptor-destroying enzyme because it cleaves a terminal sialic acid from the cellular receptors. May facilitate viral invasion of the upper airways by cleaving the sialic acid moieties on the mucin of the airway epithelial cells. Likely to plays a role in the budding process through its association with lipid rafts during intracellular transport. May additionally display a raft-association independent effect on budding. Plays a role in the determination of host range restriction on replication and virulence. Sialidase activity in late endosome/lysosome traffic seems to enhance virus replication. This is Neuraminidase from Aves.